Consider the following 203-residue polypeptide: Guanylate kinase (203 aa).

The Guanylate kinase-like domain maps to 3 to 181; that stretch reads GTLYIVAAPS…AVSEMCAIFT (179 aa). 10–17 contacts ATP; sequence APSGAGKS.

It belongs to the guanylate kinase family.

It is found in the cytoplasm. It carries out the reaction GMP + ATP = GDP + ADP. Functionally, essential for recycling GMP and indirectly, cGMP. This Xanthomonas campestris pv. campestris (strain 8004) protein is Guanylate kinase.